Reading from the N-terminus, the 306-residue chain is Arginase (306 aa).

Positions 96, 123, 125, and 127 each coordinate Mn(2+). Residues 125–129, 136–138, and Asp-178 contribute to the substrate site; these read HTDFH and SGN. 2 residues coordinate Mn(2+): Asp-226 and Asp-228. Positions 240 and 271 each coordinate substrate.

Belongs to the arginase family. The cofactor is Mn(2+).

It catalyses the reaction L-arginine + H2O = urea + L-ornithine. It functions in the pathway nitrogen metabolism; urea cycle; L-ornithine and urea from L-arginine: step 1/1. This chain is Arginase (arcB), found in Brucella abortus biovar 1 (strain 9-941).